The sequence spans 440 residues: Putative postmeiotic segregation increased 2-like protein 1 (440 aa).

The segment covering 164 to 178 has biased composition (basic and acidic residues); sequence RVEHNVESSRWEPRR. Residues 164–215 are disordered; the sequence is RVEHNVESSRWEPRRRGACGSRGGNFPSPRGGSGVASLERAESSSTEPAKAI. In terms of domain architecture, Histidine kinase spans 230-364; it reads PVVPSLSTAV…MTVSVKQLFS (135 aa).

The protein belongs to the DNA mismatch repair MutL/HexB family. Highly expressed in kidney, spleen, adrenal gland, ovary and cerebellum and to a lower extent in liver, esophagus, stomach, duodenum, colon, bladder, uterus, lung, pancreas and cerebrum. Not expressed in heart.

The sequence is that of Putative postmeiotic segregation increased 2-like protein 1 (PMS2P1) from Homo sapiens (Human).